Here is a 377-residue protein sequence, read N- to C-terminus: Succinyl-diaminopimelate desuccinylase (377 aa).

Residue H67 coordinates Zn(2+). D69 is a catalytic residue. Zn(2+) is bound at residue D100. The active-site Proton acceptor is the E134. Residues E135, E163, and H349 each coordinate Zn(2+).

It belongs to the peptidase M20A family. DapE subfamily. In terms of assembly, homodimer. Requires Zn(2+) as cofactor. Co(2+) serves as cofactor.

The catalysed reaction is N-succinyl-(2S,6S)-2,6-diaminopimelate + H2O = (2S,6S)-2,6-diaminopimelate + succinate. The protein operates within amino-acid biosynthesis; L-lysine biosynthesis via DAP pathway; LL-2,6-diaminopimelate from (S)-tetrahydrodipicolinate (succinylase route): step 3/3. Catalyzes the hydrolysis of N-succinyl-L,L-diaminopimelic acid (SDAP), forming succinate and LL-2,6-diaminopimelate (DAP), an intermediate involved in the bacterial biosynthesis of lysine and meso-diaminopimelic acid, an essential component of bacterial cell walls. The protein is Succinyl-diaminopimelate desuccinylase of Actinobacillus pleuropneumoniae serotype 5b (strain L20).